Here is an 862-residue protein sequence, read N- to C-terminus: MAQLSFNAALKMNALGNKAIHDPTNCRAKSERQMMWVCSRSGRTRVKMSRGSGGPGPVVMMSSSTGTSKVVSETSSTIVDDIPRLSANYHGDLWHHNVIQTLETPFRESSTYQERADELVVKIKDMFNALGDGDISPSAYDTAWVARVATVSSDGSEKPRFPQALNWVLNNQLQDGSWGIESHFSLCDRLLNTVNSVIALSVWKTGHSQVEQGAEFIAENLRLLNEEDELSPDFEIIFPALLQKAKALGINLPYDLPFIKSLSTTREARLTDVSAAADNIPANMLNALEGLEEVIDWNKIMRFQSKDGSFLSSPASTACVLMNTGDEKCFTLLNNLLDKFGGCVPCMYSIDLLERLSLVDNIEHLGIGRHFKQEIKVALDYVYRHWSERGIGWGRDSLVPDLNTTALGLRTLRTHGYDVSSDVLNNFKDENGRFFSSAGQTHVELRSVVNLFRASDLAFPDEGAMDDARKFAEPYLRDALATKISTNTKLYKEIEYVVEYPWHMSIPRLEARSYIDSYDDDYVWQRKTLYRMPSLSNSKCLELAKLDFNIVQSLHQEELKLLTRWWKESGMADINFTRHRVAEVYFSSATFEPEYSATRIAFTKIGCLQVLFDDMADIFATLDELKSFTEGVKRWDTSLLHEIPECMQTCFKVWFKLMEEVNNDVVKVQGRDMLAHIRKPWELYFNCYVQEREWLEAGYIPTFEEYLKTYAISVGLGPCTLQPILLMGELVKDDVVEKVHYPSNMFELVSLSWRLTNDTKTYQAEKARGQQASGIACYMKDNPGATEEDAIKHICRVVDRALKEASFEYFKPSNDIPMGCKSFIFNLRLCVQIFYKFIDGYGIANEEIKDYIRKVYIDPIQV.

Residues Asp-613, Asp-617, Asn-757, Thr-761, and Glu-765 each contribute to the Mg(2+) site. Positions 613 to 617 (DDMAD) match the DDXXD motif motif.

This sequence belongs to the terpene synthase family. Mg(2+) serves as cofactor.

It carries out the reaction (2E,6E,10E)-geranylgeranyl diphosphate = taxa-4(5),11(12)-diene + diphosphate. It participates in alkaloid biosynthesis; taxol biosynthesis; taxa-4(20),11-dien-5alpha-ol from geranylgeranyl diphosphate: step 1/2. Catalyzes the cyclization of the ubiquitous isoprenoid intermediate geranylgeranyl diphosphate to taxa-4,11-diene, the parent olefin with a taxane skeleton. This Taxus baccata (English yew) protein is Taxadiene synthase (TDC1).